The following is a 254-amino-acid chain: Ribosomal RNA small subunit methyltransferase J (254 aa).

S-adenosyl-L-methionine is bound by residues 107-108 (RD), 123-124 (ER), and Asp-174.

This sequence belongs to the methyltransferase superfamily. RsmJ family.

The protein resides in the cytoplasm. The enzyme catalyses guanosine(1516) in 16S rRNA + S-adenosyl-L-methionine = N(2)-methylguanosine(1516) in 16S rRNA + S-adenosyl-L-homocysteine + H(+). In terms of biological role, specifically methylates the guanosine in position 1516 of 16S rRNA. The protein is Ribosomal RNA small subunit methyltransferase J of Coxiella burnetii (strain CbuK_Q154) (Coxiella burnetii (strain Q154)).